The following is a 2812-amino-acid chain: Serine/threonine-protein kinase tel1 (2812 aa).

Residues 1773–2347 enclose the FAT domain; that stretch reads VAASTAYDCH…LHVLFSLVSN (575 aa). The 310-residue stretch at 2449 to 2758 folds into the PI3K/PI4K catalytic domain; that stretch reads FDDTIHFASG…DASRDPKIQR (310 aa). Residues 2455-2461 form a G-loop region; sequence FASGINA. Positions 2627-2635 are catalytic loop; sequence GLGDRHGQN. Residues 2647–2671 are activation loop; the sequence is HIDLGIAFEQGKKLPVPECVPFRLT. Polar residues predominate over residues 2739-2749; that stretch reads NQPESGNITTD. A disordered region spans residues 2739 to 2763; sequence NQPESGNITTDASRDPKIQRNNVSG. The 33-residue stretch at 2780–2812 folds into the FATC domain; it reads STLSVEASVGELIRIAQDPSYLALMFCGWSAFQ.

The protein belongs to the PI3/PI4-kinase family. ATM subfamily. Interacts with nbs1. This interaction is required for phosphorylation of histone H2A.

Its subcellular location is the nucleus. The protein localises to the chromosome. It is found in the telomere. The catalysed reaction is L-seryl-[protein] + ATP = O-phospho-L-seryl-[protein] + ADP + H(+). It catalyses the reaction L-threonyl-[protein] + ATP = O-phospho-L-threonyl-[protein] + ADP + H(+). Serine/threonine protein kinase which activates checkpoint signaling upon genotoxic stresses such as ionizing radiation (IR), ultraviolet light (UV), or DNA replication stalling, thereby acting as a DNA damage sensor. Recognizes the substrate consensus sequence [ST]-Q. Phosphorylates histone H2A to form H2AS128ph (gamma-H2A) at sites of DNA damage, involved in the regulation of DNA damage response mechanism. Undirectly involved in the phosphorylation of rad32 which is necessary for its telomere function. Required for the control of telomere length and genome stability. This Schizosaccharomyces pombe (strain 972 / ATCC 24843) (Fission yeast) protein is Serine/threonine-protein kinase tel1 (tel1).